We begin with the raw amino-acid sequence, 123 residues long: Small ribosomal subunit protein uS12c (123 aa).

The segment covering 1–20 has biased composition (polar residues); sequence MPTIQQLIRNTRQPTQNRTK. Residues 1 to 27 are disordered; the sequence is MPTIQQLIRNTRQPTQNRTKSPALKAC.

The protein belongs to the universal ribosomal protein uS12 family. Part of the 30S ribosomal subunit.

The protein resides in the plastid. It localises to the chloroplast. With S4 and S5 plays an important role in translational accuracy. Located at the interface of the 30S and 50S subunits. The sequence is that of Small ribosomal subunit protein uS12c (rps12) from Zygnema circumcarinatum (Green alga).